The following is a 161-amino-acid chain: MHLTGPTLLSLLAALLVSLGLLLWYPTKTRTKDKLLKDLNTLKINTVNLLNQVLKTDTTKLVDFHIANVHCDGIIDRLLSPDELAQLYHKDYPLYKRLVGCGYTKTVGLLHGFALWASETKTRDVSSLKYFIDCISTLDWKEPNLFAGFHTTESKVKKCIV.

Residues 5–25 form a helical membrane-spanning segment; it reads GPTLLSLLAALLVSLGLLLWY.

This sequence belongs to the IIV-6 203L/325L family.

The protein resides in the membrane. This is an uncharacterized protein from Invertebrate iridescent virus 3 (IIV-3).